Here is a 470-residue protein sequence, read N- to C-terminus: Glutamate--tRNA ligase (470 aa).

The short motif at 12–22 is the 'HIGH' region element; it reads PSPTGIFHVGG. Positions 103, 105, 125, and 127 each coordinate Zn(2+). The 'KMSKS' region motif lies at 236-240; that stretch reads KLSKR. Position 239 (K239) interacts with ATP.

This sequence belongs to the class-I aminoacyl-tRNA synthetase family. Glutamate--tRNA ligase type 1 subfamily. In terms of assembly, monomer. Zn(2+) is required as a cofactor.

The protein localises to the cytoplasm. It catalyses the reaction tRNA(Glu) + L-glutamate + ATP = L-glutamyl-tRNA(Glu) + AMP + diphosphate. Its function is as follows. Catalyzes the attachment of glutamate to tRNA(Glu) in a two-step reaction: glutamate is first activated by ATP to form Glu-AMP and then transferred to the acceptor end of tRNA(Glu). The protein is Glutamate--tRNA ligase of Frankia alni (strain DSM 45986 / CECT 9034 / ACN14a).